The sequence spans 452 residues: Trigger factor (452 aa).

Positions Gly-169–Gly-254 constitute a PPIase FKBP-type domain.

Belongs to the FKBP-type PPIase family. Tig subfamily.

It is found in the cytoplasm. It carries out the reaction [protein]-peptidylproline (omega=180) = [protein]-peptidylproline (omega=0). In terms of biological role, involved in protein export. Acts as a chaperone by maintaining the newly synthesized protein in an open conformation. Functions as a peptidyl-prolyl cis-trans isomerase. The chain is Trigger factor (tig) from Caulobacter vibrioides (strain ATCC 19089 / CIP 103742 / CB 15) (Caulobacter crescentus).